The primary structure comprises 538 residues: Lipid scramblase CLPTM1L (538 aa).

Residues 1–9 (MFPKTSFTS) are Cytoplasmic-facing. A helical transmembrane segment spans residues 10–30 (LIVGVFLLYVLHTCWVMYGIV). The Extracellular segment spans residues 31-284 (YTKPCEKRRA…IKGIFVDTNL (254 aa)). 2 N-linked (GlcNAc...) asparagine glycosylation sites follow: N90 and N100. The disordered stretch occupies residues 140–166 (ISLITGQDEPEKPDQQKQSSDSELDRP). N-linked (GlcNAc...) asparagine glycosylation occurs at N229. The helical transmembrane segment at 285 to 305 (YFLALTFFVAAFHLLFDFLAF) threads the bilayer. The Cytoplasmic segment spans residues 306-324 (KNDISFWKHKKSMVGMSSK). The chain crosses the membrane as a helical span at residues 325 to 341 (AVLWRCFSTIVIFLYLL). Over 342–402 (DEQTSLLVLV…TEEYDTLAMK (61 aa)) the chain is Extracellular. The chain crosses the membrane as a helical span at residues 403–423 (YLSYLLYPLCVGGAVYALVFV). The Cytoplasmic segment spans residues 424 to 428 (KYKSW). A helical membrane pass occupies residues 429–449 (YSWIINSLVNGVYAFGFLFML). The Extracellular segment spans residues 450 to 538 (PQLFVNYKLK…EKPKGKSHED (89 aa)).

It belongs to the CLPTM1 family.

It is found in the endoplasmic reticulum membrane. The enzyme catalyses a 6-(alpha-D-glucosaminyl)-1-(1,2-diacyl-sn-glycero-3-phospho)-1D-myo-inositol(in) = a 6-(alpha-D-glucosaminyl)-1-(1,2-diacyl-sn-glycero-3-phospho)-1D-myo-inositol(out). It carries out the reaction 6-(alpha-D-glucosaminyl)-(1-octadecanoyl,2-(9Z)-octadecenoyl-sn-glycero-3-phospho)-1D-myo-inositol(in) = 6-(alpha-D-glucosaminyl)-(1-octadecanoyl,2-(9Z)-octadecenoyl-sn-glycero-3-phospho)-1D-myo-inositol(out). The catalysed reaction is a 1,2-diacyl-sn-glycero-3-phospho-(1D-myo-inositol)(in) = a 1,2-diacyl-sn-glycero-3-phospho-(1D-myo-inositol)(out). It catalyses the reaction a 1,2-diacyl-sn-glycero-3-phosphocholine(in) = a 1,2-diacyl-sn-glycero-3-phosphocholine(out). The enzyme catalyses a 1,2-diacyl-sn-glycero-3-phosphoethanolamine(in) = a 1,2-diacyl-sn-glycero-3-phosphoethanolamine(out). In terms of biological role, scramblase that mediates the translocation of glucosaminylphosphatidylinositol (alpha-D-GlcN-(1-6)-(1,2-diacyl-sn-glycero-3-phospho)-1D-myo-inositol, GlcN-PI) across the endoplasmic reticulum (ER) membrane, from the cytosolic leaflet to the luminal leaflet of the ER membrane, where it participates in the biosynthesis of glycosylphosphatidylinositol (GPI). GPI is a lipid glycoconjugate involved in post-translational modification of proteins. Can also translocate 1,2-diacyl-sn-glycero-3-phospho-(1D-myo-inositol) (phosphatidylinositol or PI), as well as several other phospholipids (1,2-diacyl-sn-glycero-3-phosphocholine, 1,2-diacyl-sn-glycero-3-phosphoethanolamine), and N-acetylglucosaminylphosphatidylinositol (GlcNAc-PI) in vitro. The protein is Lipid scramblase CLPTM1L (clptm1l) of Danio rerio (Zebrafish).